The chain runs to 273 residues: Putative pyruvate, phosphate dikinase regulatory protein (273 aa).

149–156 contributes to the ADP binding site; it reads GPSRTSKT.

This sequence belongs to the pyruvate, phosphate/water dikinase regulatory protein family. PDRP subfamily.

The enzyme catalyses N(tele)-phospho-L-histidyl/L-threonyl-[pyruvate, phosphate dikinase] + ADP = N(tele)-phospho-L-histidyl/O-phospho-L-threonyl-[pyruvate, phosphate dikinase] + AMP + H(+). It carries out the reaction N(tele)-phospho-L-histidyl/O-phospho-L-threonyl-[pyruvate, phosphate dikinase] + phosphate + H(+) = N(tele)-phospho-L-histidyl/L-threonyl-[pyruvate, phosphate dikinase] + diphosphate. Functionally, bifunctional serine/threonine kinase and phosphorylase involved in the regulation of the pyruvate, phosphate dikinase (PPDK) by catalyzing its phosphorylation/dephosphorylation. In Rickettsia massiliae (strain Mtu5), this protein is Putative pyruvate, phosphate dikinase regulatory protein.